A 329-amino-acid chain; its full sequence is Transaldolase (329 aa).

K136 serves as the catalytic Schiff-base intermediate with substrate.

It belongs to the transaldolase family. Type 1 subfamily. As to quaternary structure, homodimer.

Its subcellular location is the cytoplasm. It carries out the reaction D-sedoheptulose 7-phosphate + D-glyceraldehyde 3-phosphate = D-erythrose 4-phosphate + beta-D-fructose 6-phosphate. The protein operates within carbohydrate degradation; pentose phosphate pathway; D-glyceraldehyde 3-phosphate and beta-D-fructose 6-phosphate from D-ribose 5-phosphate and D-xylulose 5-phosphate (non-oxidative stage): step 2/3. Transaldolase is important for the balance of metabolites in the pentose-phosphate pathway. This chain is Transaldolase, found in Methylococcus capsulatus (strain ATCC 33009 / NCIMB 11132 / Bath).